The chain runs to 660 residues: tRNA 5-methylaminomethyl-2-thiouridine biosynthesis bifunctional protein MnmC (660 aa).

Positions 1-241 are tRNA (mnm(5)s(2)U34)-methyltransferase; that stretch reads MNDHPAQDAF…KREILRGHLQ (241 aa). An FAD-dependent cmnm(5)s(2)U34 oxidoreductase region spans residues 268-660; it reads IGAGLAGCAT…FLLRKLIRGT (393 aa).

It in the N-terminal section; belongs to the methyltransferase superfamily. tRNA (mnm(5)s(2)U34)-methyltransferase family. The protein in the C-terminal section; belongs to the DAO family. FAD serves as cofactor.

It is found in the cytoplasm. It catalyses the reaction 5-aminomethyl-2-thiouridine(34) in tRNA + S-adenosyl-L-methionine = 5-methylaminomethyl-2-thiouridine(34) in tRNA + S-adenosyl-L-homocysteine + H(+). Functionally, catalyzes the last two steps in the biosynthesis of 5-methylaminomethyl-2-thiouridine (mnm(5)s(2)U) at the wobble position (U34) in tRNA. Catalyzes the FAD-dependent demodification of cmnm(5)s(2)U34 to nm(5)s(2)U34, followed by the transfer of a methyl group from S-adenosyl-L-methionine to nm(5)s(2)U34, to form mnm(5)s(2)U34. The polypeptide is tRNA 5-methylaminomethyl-2-thiouridine biosynthesis bifunctional protein MnmC (Stutzerimonas stutzeri (strain A1501) (Pseudomonas stutzeri)).